Consider the following 391-residue polypeptide: Tryptophan synthase beta chain (391 aa).

Residue Lys-86 is modified to N6-(pyridoxal phosphate)lysine.

It belongs to the TrpB family. As to quaternary structure, tetramer of two alpha and two beta chains. Pyridoxal 5'-phosphate is required as a cofactor.

The catalysed reaction is (1S,2R)-1-C-(indol-3-yl)glycerol 3-phosphate + L-serine = D-glyceraldehyde 3-phosphate + L-tryptophan + H2O. It functions in the pathway amino-acid biosynthesis; L-tryptophan biosynthesis; L-tryptophan from chorismate: step 5/5. In terms of biological role, the beta subunit is responsible for the synthesis of L-tryptophan from indole and L-serine. The chain is Tryptophan synthase beta chain from Vibrio metschnikovii.